We begin with the raw amino-acid sequence, 514 residues long: Maturase K (514 aa).

It belongs to the intron maturase 2 family. MatK subfamily.

It is found in the plastid. The protein resides in the chloroplast. Its function is as follows. Usually encoded in the trnK tRNA gene intron. Probably assists in splicing its own and other chloroplast group II introns. The chain is Maturase K from Dioon spinulosum (Gum palm).